Consider the following 109-residue polypeptide: MLDKTLRMNYLFDFYHSLLTEKQRNYMSYYYLDDLSLGEIADEYDVSRQAVYDNIRRTEAMLEEYEQKLRLLEKFETRRSLLAELRKAIASDQAVEACNSLIDRIEKLD.

The protein belongs to the UPF0122 family.

In terms of biological role, might take part in the signal recognition particle (SRP) pathway. This is inferred from the conservation of its genetic proximity to ftsY/ffh. May be a regulatory protein. This chain is UPF0122 protein ABC2295, found in Shouchella clausii (strain KSM-K16) (Alkalihalobacillus clausii).